The sequence spans 273 residues: 6-carboxyhexanoate--CoA ligase (273 aa).

It belongs to the BioW family. Homodimer. It depends on Mg(2+) as a cofactor.

The catalysed reaction is heptanedioate + ATP + CoA = 6-carboxyhexanoyl-CoA + AMP + diphosphate. Its pathway is metabolic intermediate metabolism; pimeloyl-CoA biosynthesis; pimeloyl-CoA from pimelate: step 1/1. Functionally, catalyzes the transformation of pimelate into pimeloyl-CoA with concomitant hydrolysis of ATP to AMP. The protein is 6-carboxyhexanoate--CoA ligase of Alkalihalophilus pseudofirmus (strain ATCC BAA-2126 / JCM 17055 / OF4) (Bacillus pseudofirmus).